The sequence spans 277 residues: Soluble NSF attachment protein 29 (277 aa).

Basic and acidic residues predominate over residues 1 to 11; that stretch reads MSRNPFDDDYR. 3 disordered regions span residues 1–30, 49–73, and 117–170; these read MSRNPFDDDYRPSAASSTMPVKSYTTMGHY, ESLDSTERSRRHLENSEKIGTSTAQ, and KFTK…ESSR. The segment covering 14–28 has biased composition (polar residues); that stretch reads AASSTMPVKSYTTMG. Positions 44 to 106 constitute a t-SNARE coiled-coil homology 1 domain; sequence EKTLQESLDS…QMTQRNLNSL (63 aa). Basic and acidic residues predominate over residues 49–65; the sequence is ESLDSTERSRRHLENSE. Residues 134-170 are compositionally biased toward polar residues; sequence SKSASRLSETATNLSSGGGSATFSGPSGQRTLTESSR. One can recognise a t-SNARE coiled-coil homology 2 domain in the interval 179-241; sequence EAMDNQIDEN…RDQDKQMQKI (63 aa).

Belongs to the SNAP-25 family.

It is found in the synapse. The protein localises to the synaptosome. Its function is as follows. SNAREs, soluble N-ethylmaleimide-sensitive factor-attachment protein receptors, are essential proteins for fusion of cellular membranes. SNAREs localized on opposing membranes assemble to form a trans-SNARE complex, an extended, parallel four alpha-helical bundle that drives membrane fusion. Plays a role in the processing and secretion of the aspartic protease hrg-7 from the intestine. The protein is Soluble NSF attachment protein 29 of Caenorhabditis elegans.